We begin with the raw amino-acid sequence, 102 residues long: Small ribosomal subunit protein uS10 (102 aa).

The protein belongs to the universal ribosomal protein uS10 family. In terms of assembly, part of the 30S ribosomal subunit.

Functionally, involved in the binding of tRNA to the ribosomes. In Bacillus cereus (strain G9842), this protein is Small ribosomal subunit protein uS10.